A 534-amino-acid polypeptide reads, in one-letter code: (E)-beta-farnesene synthase (534 aa).

Mg(2+)-binding residues include Asp287, Asp291, Asn431, Ser435, and Glu439. Residues 287-291 (DDMMD) carry the DDXXD motif motif.

The protein belongs to the terpene synthase family. Requires Mg(2+) as cofactor. It depends on Co(2+) as a cofactor. The cofactor is Mn(2+).

It is found in the cytoplasm. It carries out the reaction (2E,6E)-farnesyl diphosphate = (E)-beta-farnesene + diphosphate. Its pathway is secondary metabolite biosynthesis; terpenoid biosynthesis. Sesquiterpene cyclase catalyzing the production of beta-farnesene and alpha-bergamotene in equal amounts from farnesyl diphosphate. Involved in indirect defense by producing volatile signals attracting natural enemies of herbivores. The sequence is that of (E)-beta-farnesene synthase from Zea mays subsp. mexicana (Mexican teosinte).